Here is a 718-residue protein sequence, read N- to C-terminus: Fatty acid oxidation complex subunit alpha (718 aa).

The tract at residues 1–188 (MIYQGESIRV…KVGAVDAVVE (188 aa)) is enoyl-CoA hydratase/isomerase. D295 contacts substrate. A 3-hydroxyacyl-CoA dehydrogenase region spans residues 310–718 (TKEIKTAGVL…KSYFDTTSAK (409 aa)). NAD(+) is bound by residues M324, D343, 400 to 402 (VVE), K407, and S429. The active-site For 3-hydroxyacyl-CoA dehydrogenase activity is the H450. N453 is a binding site for NAD(+). Residues N500 and Y658 each contribute to the substrate site.

This sequence in the N-terminal section; belongs to the enoyl-CoA hydratase/isomerase family. It in the C-terminal section; belongs to the 3-hydroxyacyl-CoA dehydrogenase family. Heterotetramer of two alpha chains (FadB) and two beta chains (FadA).

It carries out the reaction a (3S)-3-hydroxyacyl-CoA + NAD(+) = a 3-oxoacyl-CoA + NADH + H(+). The catalysed reaction is a (3S)-3-hydroxyacyl-CoA = a (2E)-enoyl-CoA + H2O. The enzyme catalyses a 4-saturated-(3S)-3-hydroxyacyl-CoA = a (3E)-enoyl-CoA + H2O. It catalyses the reaction (3S)-3-hydroxybutanoyl-CoA = (3R)-3-hydroxybutanoyl-CoA. It carries out the reaction a (3Z)-enoyl-CoA = a 4-saturated (2E)-enoyl-CoA. The catalysed reaction is a (3E)-enoyl-CoA = a 4-saturated (2E)-enoyl-CoA. It functions in the pathway lipid metabolism; fatty acid beta-oxidation. Its function is as follows. Involved in the aerobic and anaerobic degradation of long-chain fatty acids via beta-oxidation cycle. Catalyzes the formation of 3-oxoacyl-CoA from enoyl-CoA via L-3-hydroxyacyl-CoA. It can also use D-3-hydroxyacyl-CoA and cis-3-enoyl-CoA as substrate. The protein is Fatty acid oxidation complex subunit alpha of Idiomarina loihiensis (strain ATCC BAA-735 / DSM 15497 / L2-TR).